The primary structure comprises 677 residues: Probable sulfate transporter 4.2 (677 aa).

Residues M1 to K83 are Cytoplasmic-facing. A helical membrane pass occupies residues L84 to A104. Topologically, residues R105–G108 are extracellular. Residues L109 to G129 form a helical membrane-spanning segment. The Cytoplasmic segment spans residues S130 to Q133. The chain crosses the membrane as a helical span at residues L134–V154. At D155–Y161 the chain is on the extracellular side. A helical transmembrane segment spans residues T162 to L182. Over R183–R189 the chain is Cytoplasmic. The helical transmembrane segment at F190–S210 threads the bilayer. Over Q211 to K241 the chain is Extracellular. The helical transmembrane segment at W242–G262 threads the bilayer. The Cytoplasmic segment spans residues K263–R269. Residues F270–F290 traverse the membrane as a helical segment. Topologically, residues H291–K318 are extracellular. The chain crosses the membrane as a helical span at residues L319 to A339. Residues K340–E355 are Cytoplasmic-facing. The helical transmembrane segment at L356–G376 threads the bilayer. Topologically, residues S377–G392 are extracellular. The helical transmembrane segment at L393 to F413 threads the bilayer. The Cytoplasmic portion of the chain corresponds to K414–A420. The chain crosses the membrane as a helical span at residues L421–L441. Residues W442–T459 lie on the Extracellular side of the membrane. A helical membrane pass occupies residues L460–I480. At H481–K677 the chain is on the cytoplasmic side. The STAS domain occupies Q505–C629.

This sequence belongs to the SLC26A/SulP transporter (TC 2.A.53) family.

The protein localises to the membrane. H(+)/sulfate cotransporter that may play a role in the regulation of sulfate assimilation. The sequence is that of Probable sulfate transporter 4.2 (SULTR4;2) from Arabidopsis thaliana (Mouse-ear cress).